A 2669-amino-acid polypeptide reads, in one-letter code: Nucleosome-remodeling factor subunit NURF301 (2669 aa).

A compositionally biased stretch (basic residues) spans 1 to 12; it reads MSGRGSRKRGRP. Residues 1 to 121 form a required for function in nucleosome sliding region; that stretch reads MSGRGSRKRG…EEDKSDNEDD (121 aa). A disordered region spans residues 1–125; sequence MSGRGSRKRG…SDNEDDMLLT (125 aa). The a.T hook DNA-binding region spans 6–18; that stretch reads SRKRGRPPKTPNE. Positions 38–56 are enriched in polar residues; sequence GKSQPSTPSASRGISPQSD. 5 positions are modified to phosphoserine: S40, S52, S55, S59, and S62. Residues 66 to 82 show a composition bias toward basic residues; the sequence is HTNRSRGSAAKRGRGRK. Acidic residues predominate over residues 109–125; it reads GDSEEDKSDNEDDMLLT. A DDT domain is found at 188–248; that stretch reads NTHVLRALSI…LKAILREEDA (61 aa). The PHD-type 1 zinc finger occupies 339–386; the sequence is DDHCRVCHRLGDLLCCETCPAVYHLECVDPPMNDVPTEDWQCGLCRSH. A coiled-coil region spans residues 460–515; sequence RLHSQITERRDEIERQMKLTETLTNEHKHTKRSVIEIEQEAKNELLEKEVLDEDEK. The tract at residues 505–538 is disordered; it reads LEKEVLDEDEKDGDAKSESQSIEGTKKQEECKMV. The segment covering 528-537 has biased composition (basic and acidic residues); sequence GTKKQEECKM. A coiled-coil region spans residues 688–720; sequence LQRITSAEREERKKLEKREKRERDDEEERNRLA. Disordered regions lie at residues 1026–1048, 1135–1159, and 1406–1425; these read EGKR…AESE, TGLN…NQKS, and RSGL…EPQI. Phosphoserine is present on S1417. The residue at position 1527 (T1527) is a Phosphothreonine. Positions 1559 to 1590 are enriched in low complexity; sequence SRTGGANTAAAAASPTVGGSTSTQSNPSTSTP. Disordered stretches follow at residues 1559-1596, 2181-2203, and 2283-2307; these read SRTG…VQII, INNG…ITTN, and TNEW…QTDD. Residues 2283–2293 are compositionally biased toward polar residues; that stretch reads TNEWETCSRGS. Positions 2338–2373 form a coiled coil; sequence KNDEVAELGEQKQSQLERHKELLKKNILRKRSLLER. A disordered region spans residues 2382-2432; the sequence is DVKTKVQRHVRPLSNASPDEQSENERSGEPNLDFKRTEVQNPRHGAGRPKK. Phosphoserine occurs at positions 2395, 2398, and 2403. The span at 2404-2419 shows a compositional bias: basic and acidic residues; that stretch reads ENERSGEPNLDFKRTE. The PHD-type 2 zinc finger occupies 2481-2546; sequence EFICIDCKRA…EYVCPECQRK (66 aa). Positions 2556–2660 constitute a Bromo domain; the sequence is KLTSNDVEEL…SYFVQKIKNF (105 aa).

It belongs to the BPTF family. Component of the NURF complex composed of Caf1-55, E(bx), Nurf-38 and Iswi. Interacts with Trl. Interacts with histone H3-K4Me3.

The protein localises to the nucleus. Histone-binding component of NURF (nucleosome remodeling factor), a complex which catalyzes ATP-dependent nucleosome sliding and facilitates transcription of chromatin. Specifically recognizes H3 tails trimethylated on 'Lys-4' (H3K4me3), which mark transcription start sites of virtually all active genes. Required for homeotic gene expression, proper larval blood cell development, normal male X chromosome morphology, ecdysteroid signaling and metamorphosis. The protein is Nucleosome-remodeling factor subunit NURF301 (E(bx)) of Drosophila melanogaster (Fruit fly).